The chain runs to 187 residues: MAIKSVLYDKYKKDVTKSLMKEFNYKSTMEIPRLEKIVINSGLGDATSDSKIVEIGLKELHLITGQKPIATKSKKSIATFKLREGQAIGAKVTLRRENMWNFLTKLISIAIPRIRDFRGLSTKSFDGNGNYTFGIKEQIIFPEIVYDDVKKLRGFDITIVTSAKTDKEAMFLLKELGMPFVKTKEAK.

It belongs to the universal ribosomal protein uL5 family. In terms of assembly, part of the 50S ribosomal subunit; part of the 5S rRNA/L5/L18/L25 subcomplex. Contacts the 5S rRNA and the P site tRNA. Forms a bridge to the 30S subunit in the 70S ribosome.

Its function is as follows. This is one of the proteins that bind and probably mediate the attachment of the 5S RNA into the large ribosomal subunit, where it forms part of the central protuberance. In the 70S ribosome it contacts protein S13 of the 30S subunit (bridge B1b), connecting the 2 subunits; this bridge is implicated in subunit movement. Contacts the P site tRNA; the 5S rRNA and some of its associated proteins might help stabilize positioning of ribosome-bound tRNAs. The polypeptide is Large ribosomal subunit protein uL5 (Malacoplasma penetrans (strain HF-2) (Mycoplasma penetrans)).